A 1651-amino-acid polypeptide reads, in one-letter code: Vitellogenin-6 (1651 aa).

Positions 1–15 (MKFFIALALLGAALA) are cleaved as a signal peptide. The region spanning 34–716 (FRAGREYRYL…TTESVLPTEM (683 aa)) is the Vitellogenin domain. Residues asparagine 252 and asparagine 1288 are each glycosylated (N-linked (GlcNAc...) asparagine). One can recognise a VWFD domain in the interval 1340-1515 (ANCVVKSTKI…SYLYKDSKCN (176 aa)). 2 disulfides stabilise this stretch: cysteine 1342–cysteine 1479 and cysteine 1364–cysteine 1514. The disordered stretch occupies residues 1527 to 1556 (FQRIEKNQEEEKDQEMNYEESRREQDDEPT).

In terms of tissue distribution, synthesized in Caenorhabditis only by 32 cells building the intestine of adult hermaphroditic individuals; they are cotranslationally secreted into the body cavity and subsequently taken up by the gonad.

It localises to the secreted. Its function is as follows. Precursor of the egg-yolk proteins that are sources of nutrients during embryonic development. May play a role in cholesterol uptake. May be involved in thermotolerance. This chain is Vitellogenin-6 (vit-6), found in Caenorhabditis elegans.